A 374-amino-acid chain; its full sequence is MDGLGVRNETTFNDWKARIQSASRFEHVFDLATDRQRCTPDEVKNDSLWSKYMFPKPFAPTTLKSYKSRLIKIIFSLVEEADLQNPAYDLDREFDSVEFQHLLVSPKELCKRMLELRSVTKETLQLTINFYTNAMNLPEFKIPRMVMLPRDKELKTIREKEKNFMLKNAIDTILNFIDSKIKLMNSDYVHDRGLIRGAIVFCIMLGTGMRINEARQLSVDDLNVLIKKGKLRSDTIGLKRKRSRKNTLNNIKTKPLELAREIYARNPTVLQISKNTSTPFKDFRRLLDEAGVEMERPRSNMIRHYLSSNLYNSGVPLQKVARLMNHESPASTKPYLNKYNFDESSSDEESGGNNRDSSTGSSANSSSLYYQTGD.

The Tyr recombinase domain occupies 169 to 349 (AIDTILNFID…NFDESSSDEE (181 aa)). Active-site residues include arginine 210, lysine 239, arginine 303, and histidine 326. Residues 328 to 374 (SPASTKPYLNKYNFDESSSDEESGGNNRDSSTGSSANSSSLYYQTGD) form a disordered region. Tyrosine 335 functions as the O-(3'-phospho-DNA)-tyrosine intermediate in the catalytic mechanism. Residues 357 to 367 (SSTGSSANSSS) are compositionally biased toward low complexity.

It belongs to the 'phage' integrase family.

Its function is as follows. Involved in very late gene activation. The polypeptide is Very late expression factor 1 (VLF-1) (Orgyia pseudotsugata (Douglas-fir tussock moth)).